The primary structure comprises 411 residues: KIN17-like protein (411 aa).

The C2H2-type zinc-finger motif lies at 28–50 (CQMCQKQCRDENGFKCHCMSESH). The interval 51–160 (QRQMQVFGQN…KERLKNKRVK (110 aa)) is winged helix-turn-helix (wHTH). The stretch at 147–183 (ETLFKERLKNKRVKSDLAEEEKQEREIQRQIERAAEK) forms a coiled coil. 2 disordered regions span residues 182 to 211 (EKLNGGGGEGETSGNDEVVDDGDDERKKDE) and 232 to 286 (VATG…EEEK). Residues 253–286 (KVERGEKRKRSGDSGRSEKERRSALDELMKEEEK) are compositionally biased toward basic and acidic residues. The Nuclear localization signal (NLS) signature appears at 259 to 262 (KRKR). A coiled-coil region spans residues 265–294 (DSGRSEKERRSALDELMKEEEKKKERMNRK). Residues 301–352 (GIIVKVMSKALAEKGYYKQKGVVKKVIDNYVGEIKMLDSKHVLRVDQKELET) are C-terminal subdomain A. A C-terminal subdomain B region spans residues 358–409 (GGMVKIVNGAYRGSNARLLGVDTEKFCAKVQIEKGVYDGRVIKSIEYEDICK).

This sequence belongs to the KIN17 family. In terms of assembly, interacts with SPL7. Expressed in root vasculature, lateral roots, cotyledons, rosette leaves, cauline leaves, stems, sepals, style of pistils, mature pollen grains and siliques.

Its subcellular location is the nucleus speckle. In terms of biological role, promotes the copper deficiency response by direct interaction with SPL7. Acts with SPL7 in a common pathway to promote copper-responsive genes and alleviate oxidative stress during copper-limiting periods. May promote SPL7 function when copper is limiting. Participates in the control of general plant growth and development, and in the response to counteract the negative effects of UV radiation. The sequence is that of KIN17-like protein from Arabidopsis thaliana (Mouse-ear cress).